A 621-amino-acid polypeptide reads, in one-letter code: Chaperone protein HtpG (621 aa).

Positions Met1–Arg341 are a; substrate-binding. Residues Glu342–Asn547 are b. The c stretch occupies residues Trp548–Leu621.

This sequence belongs to the heat shock protein 90 family. Homodimer.

It is found in the cytoplasm. Its function is as follows. Molecular chaperone. Has ATPase activity. This Helicobacter pylori (strain J99 / ATCC 700824) (Campylobacter pylori J99) protein is Chaperone protein HtpG.